Consider the following 367-residue polypeptide: MYAAVKPLSKYLQFKSVHIYDAIFTLHSKVTVALLLACTFLLSSKQYFGDPIQCFGDKDMDYVHAFCWIYGAYVSDNVTVTPLRNGAAQCRPDAVSKVVPPENRNYITYYQWVVLVLLLESFVFYMPAFLWKIWEGGRLKHLCDDFHKMAVCKDKSRTHLRVLVNYFSSDYKETHFRYFVSYVFCEILNLSISILNFLLLDVFFGGFWGRYRNALLSLYNGDYNQWNIITMAVFPKCAKCEMYKGGPSGSSNIYDYLCLLPLNILNEKIFAFLWIWFILVAMLISLKFLYRLATVLYPGMRLQLLRARARFMPKKHLQVALRNCSFGDWFVLMRVGNNISPELFRKLLEELYEAQSLIKIPPGADKI.

The Cytoplasmic portion of the chain corresponds to 1-21; that stretch reads MYAAVKPLSKYLQFKSVHIYD. A helical membrane pass occupies residues 22–42; that stretch reads AIFTLHSKVTVALLLACTFLL. The Extracellular portion of the chain corresponds to 43–110; it reads SSKQYFGDPI…PENRNYITYY (68 aa). The helical transmembrane segment at 111–131 threads the bilayer; sequence QWVVLVLLLESFVFYMPAFLW. Topologically, residues 132–186 are cytoplasmic; it reads KIWEGGRLKHLCDDFHKMAVCKDKSRTHLRVLVNYFSSDYKETHFRYFVSYVFCE. A helical transmembrane segment spans residues 187–207; the sequence is ILNLSISILNFLLLDVFFGGF. At 208–268 the chain is on the extracellular side; sequence WGRYRNALLS…LLPLNILNEK (61 aa). Residues 269-289 form a helical membrane-spanning segment; sequence IFAFLWIWFILVAMLISLKFL. At 290 to 367 the chain is on the cytoplasmic side; that stretch reads YRLATVLYPG…IKIPPGADKI (78 aa).

This sequence belongs to the pannexin family. As to expression, expressed in nurse cells and oocyte during oogenesis. Uniform expression in imaginal wing disk and low expression in developing imaginal CNS. Expressed in embryonic pole cells and primordial germ cells.

Its subcellular location is the cell membrane. The protein localises to the cell junction. It is found in the gap junction. Functionally, structural component of the gap junctions in germline cells. Required for differentiation and survival of germline cysts in females and of spermatogonia in males; gap junctional communication between spermatogonia and somatic cyst cells may be required for normal differentiation and survival of spermatogonia. In Drosophila melanogaster (Fruit fly), this protein is Innexin inx4 (zpg).